We begin with the raw amino-acid sequence, 132 residues long: Histone H2A.1 (132 aa).

It belongs to the histone H2A family. The nucleosome is a histone octamer containing two molecules each of H2A, H2B, H3 and H4 assembled in one H3-H4 heterotetramer and two H2A-H2B heterodimers. The octamer wraps approximately 147 bp of DNA.

Its subcellular location is the nucleus. It localises to the chromosome. Functionally, core component of nucleosome. Nucleosomes wrap and compact DNA into chromatin, limiting DNA accessibility to the cellular machineries which require DNA as a template. Histones thereby play a central role in transcription regulation, DNA repair, DNA replication and chromosomal stability. DNA accessibility is regulated via a complex set of post-translational modifications of histones, also called histone code, and nucleosome remodeling. This is Histone H2A.1 from Leishmania infantum.